The primary structure comprises 871 residues: DNA mismatch repair protein MutS (871 aa).

ATP is bound at residue 616–623 (GPNMAGKS). The tract at residues 801–825 (ETEKTEESMEGTNLPKKKKEEKTSS) is disordered.

The protein belongs to the DNA mismatch repair MutS family.

This protein is involved in the repair of mismatches in DNA. It is possible that it carries out the mismatch recognition step. This protein has a weak ATPase activity. In Clostridium kluyveri (strain NBRC 12016), this protein is DNA mismatch repair protein MutS.